Consider the following 339-residue polypeptide: MRSAYAAMSVIGAGSYGTALAITLARNGHEVVLWGHNPQHQAQLQADRCHQAFLPDVPFPDTLIVESDLASAITASRDVLVVVPSHVFGDVLQQIKPHLRADSRLVWATKGLEKETGRLLQDVARETLGESIPLAVISGPTFAKELAAGLPTAIALAATDGVFAEDLQQLLHCGKSFRVYNNPDFIGVQLGGAVKNVIAIGAGISDGIGFGANARTALITRGLAEMSRLGAALGADPATFMGMAGLGDLVLTCTDNQSRNRRFGMMLGQGFDVEGAQDAIGQVVEGFRNTKEVKVLAERYAVEMPITEQIYQVLYCGKNTRDAALSLLGRSRKDENNGG.

NADPH-binding residues include S15, Y16, H36, and K110. Sn-glycerol 3-phosphate contacts are provided by K110, G139, and T141. Position 143 (A143) interacts with NADPH. Sn-glycerol 3-phosphate contacts are provided by K195, D248, S258, R259, and N260. K195 acts as the Proton acceptor in catalysis. R259 is a binding site for NADPH. 2 residues coordinate NADPH: V283 and E285.

It belongs to the NAD-dependent glycerol-3-phosphate dehydrogenase family.

The protein resides in the cytoplasm. The catalysed reaction is sn-glycerol 3-phosphate + NAD(+) = dihydroxyacetone phosphate + NADH + H(+). The enzyme catalyses sn-glycerol 3-phosphate + NADP(+) = dihydroxyacetone phosphate + NADPH + H(+). The protein operates within membrane lipid metabolism; glycerophospholipid metabolism. In terms of biological role, catalyzes the reduction of the glycolytic intermediate dihydroxyacetone phosphate (DHAP) to sn-glycerol 3-phosphate (G3P), the key precursor for phospholipid synthesis. This is Glycerol-3-phosphate dehydrogenase [NAD(P)+] from Erwinia tasmaniensis (strain DSM 17950 / CFBP 7177 / CIP 109463 / NCPPB 4357 / Et1/99).